The chain runs to 347 residues: Heme A synthase (347 aa).

8 helical membrane passes run 14-34, 96-116, 129-149, 162-182, 199-219, 260-280, 287-307, and 311-331; these read VKIW…IGGI, FHRL…LYFM, FILI…MVKS, LAMH…HFLL, VFYI…LVAG, FIHE…LLVL, MYLL…TFIY, and IILA…SIYL. A heme-binding site is contributed by His-262. Heme is bound at residue His-317.

The protein belongs to the COX15/CtaA family. Type 2 subfamily. As to quaternary structure, interacts with CtaB. Requires heme b as cofactor.

The protein localises to the cell membrane. The enzyme catalyses Fe(II)-heme o + 2 A + H2O = Fe(II)-heme a + 2 AH2. It functions in the pathway porphyrin-containing compound metabolism; heme A biosynthesis; heme A from heme O: step 1/1. Functionally, catalyzes the conversion of heme O to heme A by two successive hydroxylations of the methyl group at C8. The first hydroxylation forms heme I, the second hydroxylation results in an unstable dihydroxymethyl group, which spontaneously dehydrates, resulting in the formyl group of heme A. This chain is Heme A synthase, found in Ehrlichia ruminantium (strain Gardel).